The sequence spans 442 residues: Elongation factor 1-gamma (442 aa).

The GST N-terminal domain maps to 2 to 87 (AAGTLYTYPE…YLSNDVLRGS (86 aa)). The 129-residue stretch at 88-216 (TPQASAQVLQ…VKLCEKMAQF (129 aa)) folds into the GST C-terminal domain. Composition is skewed to basic and acidic residues over residues 227–242 (KKEAPIKKEKGGKEGG) and 249–263 (QEKKEKKKEEKKAAP). A disordered region spans residues 227–273 (KKEAPIKKEKGGKEGGKQQPQQQEKKEKKKEEKKAAPAEEEMDECEA). The EF-1-gamma C-terminal domain occupies 281-442 (AKDPFAHLPK…KPFNQGKIFK (162 aa)).

In terms of assembly, EF-1 is composed of four subunits: alpha, beta, delta, and gamma.

In terms of biological role, probably plays a role in anchoring the complex to other cellular components. This Danio rerio (Zebrafish) protein is Elongation factor 1-gamma (eef1g).